Reading from the N-terminus, the 199-residue chain is Chromophore lyase CpcT/CpeT (199 aa).

Belongs to the CpcT/CpeT biliprotein lyase family.

Covalently attaches a chromophore to Cys residue(s) of phycobiliproteins. The chain is Chromophore lyase CpcT/CpeT from Prochlorococcus marinus (strain NATL1A).